The sequence spans 98 residues: NADH-ubiquinone oxidoreductase chain 4L (98 aa).

3 consecutive transmembrane segments (helical) span residues 1–21 (MTPTYMNIMLAFTISLLGMLI), 29–49 (SLLCLEGMMMSLFIMTTLIAL), and 61–81 (IILLVFAACEAAVGLALLVSI).

This sequence belongs to the complex I subunit 4L family. As to quaternary structure, core subunit of respiratory chain NADH dehydrogenase (Complex I) which is composed of 45 different subunits.

It localises to the mitochondrion inner membrane. The enzyme catalyses a ubiquinone + NADH + 5 H(+)(in) = a ubiquinol + NAD(+) + 4 H(+)(out). Its function is as follows. Core subunit of the mitochondrial membrane respiratory chain NADH dehydrogenase (Complex I) which catalyzes electron transfer from NADH through the respiratory chain, using ubiquinone as an electron acceptor. Part of the enzyme membrane arm which is embedded in the lipid bilayer and involved in proton translocation. This chain is NADH-ubiquinone oxidoreductase chain 4L (MT-ND4L), found in Macaca maura (Moor macaque).